The sequence spans 235 residues: Segregation and condensation protein A (235 aa).

This sequence belongs to the ScpA family. Component of a cohesin-like complex composed of ScpA, ScpB and the Smc homodimer, in which ScpA and ScpB bind to the head domain of Smc. The presence of the three proteins is required for the association of the complex with DNA.

Its subcellular location is the cytoplasm. Functionally, participates in chromosomal partition during cell division. May act via the formation of a condensin-like complex containing Smc and ScpB that pull DNA away from mid-cell into both cell halves. This chain is Segregation and condensation protein A, found in Streptococcus agalactiae serotype Ia (strain ATCC 27591 / A909 / CDC SS700).